We begin with the raw amino-acid sequence, 70 residues long: MNLIAAAIAIGLGALGAGIGNGLIVSKTVEGIARQPEAGRELRTLMFIGVALVEALPIIAVVIAFLAFFG.

2 helical membrane passes run 4–24 (IAAA…NGLI) and 45–65 (LMFI…VIAF).

Belongs to the ATPase C chain family. As to quaternary structure, F-type ATPases have 2 components, F(1) - the catalytic core - and F(0) - the membrane proton channel. F(1) has five subunits: alpha(3), beta(3), gamma(1), delta(1), epsilon(1). F(0) has three main subunits: a(1), b(2) and c(10-14). The alpha and beta chains form an alternating ring which encloses part of the gamma chain. F(1) is attached to F(0) by a central stalk formed by the gamma and epsilon chains, while a peripheral stalk is formed by the delta and b chains.

It localises to the cell membrane. In terms of biological role, f(1)F(0) ATP synthase produces ATP from ADP in the presence of a proton or sodium gradient. F-type ATPases consist of two structural domains, F(1) containing the extramembraneous catalytic core and F(0) containing the membrane proton channel, linked together by a central stalk and a peripheral stalk. During catalysis, ATP synthesis in the catalytic domain of F(1) is coupled via a rotary mechanism of the central stalk subunits to proton translocation. This chain is ATP synthase subunit c, found in Bacillus pumilus (strain SAFR-032).